We begin with the raw amino-acid sequence, 182 residues long: MRRMWATQGLAVALALSVLPGSRALRPGDCEVCISYLGRFYQDLKDRDVTFSPATIENELIKFCREARGKENRLCYYIGATDDAATKIINEVSKPLAHHIPVEKICEKLKKKDSQICELKYDKQIDLSTVDLKKLRVKELKKILDDWGETCKGCAEKSDYIRKINELMPKYAPKAASARTDL.

The N-terminal stretch at 1–24 (MRRMWATQGLAVALALSVLPGSRA) is a signal peptide. 4 cysteine pairs are disulfide-bonded: cysteine 30/cysteine 117, cysteine 33/cysteine 106, cysteine 64/cysteine 75, and cysteine 151/cysteine 154. Residue tyrosine 76 is modified to Phosphotyrosine. Residues 96 to 158 (LAHHIPVEKI…ETCKGCAEKS (63 aa)) are interacts with ERN1, EIF2AK3 and ATF6. An interacts with HSPA5 region spans residues 129 to 172 (TVDLKKLRVKELKKILDDWGETCKGCAEKSDYIRKINELMPKYA).

The protein belongs to the ARMET family. Interacts directly (via SAP domain) with HSPA5/BiP; the interaction inhibits ATP binding to HSPA5/BiP and subsequent nucleotide exchange. Component of a complex containing at least CRELD2, MANF, MATN3 and PDIA4. Interacts (via C-terminus) with ERN1 (via luminal domain); the interaction is decreased in the presence of increasing concentrations of Ca(2+). May contain sialic acid residues.

It is found in the secreted. It localises to the endoplasmic reticulum lumen. Its subcellular location is the sarcoplasmic reticulum lumen. Selectively promotes the survival of dopaminergic neurons of the ventral mid-brain. Modulates GABAergic transmission to the dopaminergic neurons of the substantia nigra. Enhances spontaneous, as well as evoked, GABAergic inhibitory postsynaptic currents in dopaminergic neurons. Inhibits cell proliferation and endoplasmic reticulum (ER) stress-induced cell death. Retained in the ER/sarcoplasmic reticulum (SR) through association with the endoplasmic reticulum chaperone protein HSPA5 under normal conditions. Stabilizes HSPA5/BiP in its substrate-bound ADP state, which facilitates HSPA5/BiP incorporation into chaperone-client complexes during endoplasmic reticulum stress, its interaction with HSPA5/BiP inhibits ATP binding to HSPA5/BiP and subsequent nucleotide exchange. As a result acts as a repressor of the unfolded protein response (UPR) pathway. Up-regulated and secreted by the ER/SR in response to ER stress and hypoxia. Following secretion by the ER/SR, directly binds to 3-O-sulfogalactosylceramide, a lipid sulfatide in the outer cell membrane of target cells. Sulfatide binding promotes its cellular uptake by endocytosis, and is required for its role in alleviating ER stress and cell toxicity under hypoxic and ER stress conditions. Essential for embryonic lung development. Required for the correct postnatal temporal and structural development of splenic white pulp. Required for the repair-associated myeloid response in skeletal muscle, acts as a regulator of phenotypic transition towards prorepair macrophages in response to muscle injury and as a result limits excessive proinflammatory signaling. Represses RELA expression and therefore NF-kB signaling in the myocardium, as a result limits macrophage infiltration of injured tissue and M1 macrophage differentiation in response to myocardial injury. Required for endochondral ossification in long bones and the skull during postnatal development. In Homo sapiens (Human), this protein is Mesencephalic astrocyte-derived neurotrophic factor.